We begin with the raw amino-acid sequence, 196 residues long: GTP cyclohydrolase-2 (196 aa).

A GTP-binding site is contributed by Arg-49–Glu-53. Positions 54, 65, and 67 each coordinate Zn(2+). GTP is bound by residues Gln-70, Glu-92–Arg-94, and Thr-114. The active-site Proton acceptor is Asp-126. Catalysis depends on Arg-128, which acts as the Nucleophile. 2 residues coordinate GTP: Thr-149 and Lys-154.

Belongs to the GTP cyclohydrolase II family. As to quaternary structure, homodimer. The cofactor is Zn(2+).

It carries out the reaction GTP + 4 H2O = 2,5-diamino-6-hydroxy-4-(5-phosphoribosylamino)-pyrimidine + formate + 2 phosphate + 3 H(+). The protein operates within cofactor biosynthesis; riboflavin biosynthesis; 5-amino-6-(D-ribitylamino)uracil from GTP: step 1/4. Its function is as follows. Catalyzes the conversion of GTP to 2,5-diamino-6-ribosylamino-4(3H)-pyrimidinone 5'-phosphate (DARP), formate and pyrophosphate. This Enterobacter sp. (strain 638) protein is GTP cyclohydrolase-2.